The following is a 490-amino-acid chain: V-type proton ATPase subunit B (490 aa).

Arg380 is a binding site for ATP.

It belongs to the ATPase alpha/beta chains family. In terms of assembly, V-ATPase is a heteromultimeric enzyme made up of two complexes: the ATP-hydrolytic V1 complex and the proton translocation V0 complex. The V1 complex consists of three catalytic AB heterodimers that form a heterohexamer, three peripheral stalks each consisting of EG heterodimers, one central rotor including subunits D and F, and the regulatory subunits C and H. The proton translocation complex V0 consists of the proton transport subunit a, a ring of proteolipid subunits c9c'', rotary subunit d, subunits e and f, and the accessory subunits VhaAC45 and ATP6AP2. In terms of tissue distribution, expressed in Malpighian tubules, rectum, antennal palps and oviduct.

In terms of biological role, non-catalytic subunit of the V1 complex of vacuolar(H+)-ATPase (V-ATPase), a multisubunit enzyme composed of a peripheral complex (V1) that hydrolyzes ATP and a membrane integral complex (V0) that translocates protons. V-ATPase is responsible for acidifying and maintaining the pH of intracellular compartments and in some cell types, is targeted to the plasma membrane, where it is responsible for acidifying the extracellular environment. Essential for the proper assembly and activity of V-ATPase. This chain is V-type proton ATPase subunit B (Vha55), found in Drosophila melanogaster (Fruit fly).